A 424-amino-acid chain; its full sequence is Ancylostoma secreted protein (424 aa).

An N-terminal signal peptide occupies residues Met1–Ala18. 2 SCP domains span residues Leu41 to Tyr177 and Leu242 to Tyr387.

Belongs to the CRISP family.

The protein resides in the secreted. Its function is as follows. Associated with the transition to parasitism by infective hookworm larvae. This Ancylostoma caninum (Dog hookworm) protein is Ancylostoma secreted protein (ASP).